The chain runs to 77 residues: Large ribosomal subunit protein uL24 (77 aa).

Belongs to the universal ribosomal protein uL24 family. Part of the 50S ribosomal subunit.

One of two assembly initiator proteins, it binds directly to the 5'-end of the 23S rRNA, where it nucleates assembly of the 50S subunit. Functionally, one of the proteins that surrounds the polypeptide exit tunnel on the outside of the subunit. The sequence is that of Large ribosomal subunit protein uL24 from Sulfurovum sp. (strain NBC37-1).